The following is a 151-amino-acid chain: Ribosome maturation factor RimP (151 aa).

It belongs to the RimP family.

Its subcellular location is the cytoplasm. Required for maturation of 30S ribosomal subunits. The protein is Ribosome maturation factor RimP of Vibrio vulnificus (strain CMCP6).